Here is a 316-residue protein sequence, read N- to C-terminus: Ribosomal RNA small subunit methyltransferase H (316 aa).

S-adenosyl-L-methionine-binding positions include 35–37 (GGH), Asp55, Tyr79, Asp100, and Gln107.

The protein belongs to the methyltransferase superfamily. RsmH family.

It localises to the cytoplasm. The catalysed reaction is cytidine(1402) in 16S rRNA + S-adenosyl-L-methionine = N(4)-methylcytidine(1402) in 16S rRNA + S-adenosyl-L-homocysteine + H(+). Functionally, specifically methylates the N4 position of cytidine in position 1402 (C1402) of 16S rRNA. The protein is Ribosomal RNA small subunit methyltransferase H of Nitrosospira multiformis (strain ATCC 25196 / NCIMB 11849 / C 71).